Reading from the N-terminus, the 429-residue chain is Adenylosuccinate synthetase (429 aa).

GTP-binding positions include 12-18 (GDEGKGK) and 40-42 (GHT). D13 serves as the catalytic Proton acceptor. Residues D13 and G40 each coordinate Mg(2+). Residues 13–16 (DEGK), 38–41 (NAGH), T128, R142, Q223, and R302 contribute to the IMP site. H41 serves as the catalytic Proton donor. 298–304 (TVTGRPR) serves as a coordination point for substrate. Residues R304, 330-332 (LLD), and 412-414 (SVG) contribute to the GTP site.

It belongs to the adenylosuccinate synthetase family. Homodimer. It depends on Mg(2+) as a cofactor.

Its subcellular location is the cytoplasm. It catalyses the reaction IMP + L-aspartate + GTP = N(6)-(1,2-dicarboxyethyl)-AMP + GDP + phosphate + 2 H(+). The protein operates within purine metabolism; AMP biosynthesis via de novo pathway; AMP from IMP: step 1/2. Plays an important role in the de novo pathway of purine nucleotide biosynthesis. Catalyzes the first committed step in the biosynthesis of AMP from IMP. This chain is Adenylosuccinate synthetase, found in Lactobacillus delbrueckii subsp. bulgaricus (strain ATCC 11842 / DSM 20081 / BCRC 10696 / JCM 1002 / NBRC 13953 / NCIMB 11778 / NCTC 12712 / WDCM 00102 / Lb 14).